A 1667-amino-acid polypeptide reads, in one-letter code: Myomesin-1 (1667 aa).

Phosphoserine is present on residues serine 124 and serine 142. Over residues 192–210 the composition is skewed to low complexity; that stretch reads SKQSTASKQSATSKRTTST. A disordered region spans residues 192-217; that stretch reads SKQSTASKQSATSKRTTSTLQREETF. 2 Ig-like C2-type domains span residues 258-349 and 376-478; these read PEFI…ASVV and PYGY…AYVF. Fibronectin type-III domains lie at 492 to 587, 620 to 714, and 721 to 814; these read APLD…ALDP, PPTD…VVGD, and APGK…VKAA. The interval 818 to 915 is disordered; the sequence is GVSPDVWPQL…PKKKKDPVAV (98 aa). 2 positions are modified to phosphoserine: serine 863 and serine 867. Residues 885-894 show a composition bias toward low complexity; the sequence is EPLSSPPQEA. Fibronectin type-III domains follow at residues 918-1016 and 1023-1122; these read APYD…CEEW and PPHS…TRPG. Serine 1036 bears the Phosphoserine mark. 3 consecutive Ig-like C2-type domains span residues 1114–1212, 1340–1426, and 1555–1644; these read PVVA…EEMK, PHFA…LKLV, and RVLG…FTVS.

Homodimer. Interacts with TTN/titin and PNKD. In terms of tissue distribution, ubiquitously expressed in all striated muscles. Expressed in all fiber types.

The protein localises to the cytoplasm. It is found in the myofibril. The protein resides in the sarcomere. It localises to the m line. Functionally, may link the intermediate filament cytoskeleton to the M-disk of the myofibrils in striated muscle. May also contact myosin filaments. Also binds beta-integrins. The polypeptide is Myomesin-1 (Myom1) (Mus musculus (Mouse)).